The chain runs to 493 residues: Ribose import ATP-binding protein RbsA (493 aa).

2 ABC transporter domains span residues 5 to 241 (LKIS…VGRR) and 252 to 491 (EKGE…AAAI). 37 to 44 (GENGAGKS) lines the ATP pocket.

Belongs to the ABC transporter superfamily. Ribose importer (TC 3.A.1.2.1) family. In terms of assembly, the complex is composed of an ATP-binding protein (RbsA), two transmembrane proteins (RbsC) and a solute-binding protein (RbsB).

The protein localises to the cell inner membrane. The enzyme catalyses D-ribose(out) + ATP + H2O = D-ribose(in) + ADP + phosphate + H(+). Part of the ABC transporter complex RbsABC involved in ribose import. Responsible for energy coupling to the transport system. This is Ribose import ATP-binding protein RbsA from Haemophilus influenzae (strain 86-028NP).